Consider the following 130-residue polypeptide: MAKVPSRSPRKRVRKQVADGMAHIHASFNNTIVTITDRQGNALSWATSGGSGFRGSRKSTPFAAQVAAERAGAAAQDYGLKNLEVFVKGPGPGRESAIRALNAVGYKITNITDVTPIPHNGCRPPKKRRV.

Belongs to the universal ribosomal protein uS11 family. Part of the 30S ribosomal subunit. Interacts with proteins S7 and S18. Binds to IF-3.

Functionally, located on the platform of the 30S subunit, it bridges several disparate RNA helices of the 16S rRNA. Forms part of the Shine-Dalgarno cleft in the 70S ribosome. This chain is Small ribosomal subunit protein uS11, found in Shewanella baltica (strain OS223).